A 275-amino-acid chain; its full sequence is MSERKKRGSSDADSRRGVAIISPPKRRSQRKSASDSPIPAPIMKRSITVKKIMPRKTLAAIANTGSQFTPKVSNVTAAPRRSSRISPKIQKENAFSEQSQMDPKDVTSQSSAPEIDVLSPIPVNIQLSPKLDNRDMIMSQKVRRSYSRLEMSLNSSAFLYSPTRKTDSSDTSTPNAVLKSSRISLFGFDKLLNSEMPEGELKKSSAVTREKTANERNLQTVLPEEPDHNIPGVVLAKQKRRKRKVPVLEKSDVDEWAAIMNAEFDEAEKFDLTVE.

The span at methionine 1–arginine 16 shows a compositional bias: basic and acidic residues. 2 disordered regions span residues methionine 1 to isoleucine 42 and asparagine 63 to valine 117. Polar residues-rich tracts occupy residues asparagine 63–threonine 76 and asparagine 93–alanine 112. Positions lysine 91 to asparagine 93 match the KEN box motif. The FGF motif motif lies at phenylalanine 186–phenylalanine 188. The C-terminal Sororin domain stretch occupies residues valine 253–glutamate 275.

This sequence belongs to the sororin family. As to quaternary structure, interacts with the APC/C complex. Interacts with the chromatin-bound cohesin complex; the interaction is indirect, occurs after DNA replication and requires acetylation of the cohesin component smc3. Interacts (via the FGF motif) with pds5a and pds5b; the interaction is direct and prevents the interaction of pds5a with wapl. In terms of processing, ubiquitinated by the APC/C complex in G1, leading to its degradation.

Its subcellular location is the nucleus. It localises to the chromosome. It is found in the cytoplasm. Regulator of sister chromatid cohesion in mitosis stabilizing cohesin complex association with chromatin. May antagonize the action of wapl which stimulates cohesin dissociation from chromatin. Cohesion ensures that chromosome partitioning is accurate in both meiotic and mitotic cells and plays an important role in DNA repair. Required for efficient DNA double-stranded break repair. This chain is Sororin-B (cdca5-b), found in Xenopus laevis (African clawed frog).